Reading from the N-terminus, the 322-residue chain is uncharacterized protein (322 aa).

A signal peptide spans 1-27; sequence MKRLFWNLKHKKAWLVLLLGTGMILSS. The N-palmitoyl cysteine moiety is linked to residue C28. C28 carries the S-diacylglycerol cysteine lipid modification. A compositionally biased stretch (polar residues) spans 235–254; that stretch reads DNSTNPNAPGSGQGDSTPPA. Residues 235–298 form a disordered region; the sequence is DNSTNPNAPG…AVQRSQKSYG (64 aa). A compositionally biased stretch (gly residues) spans 257-267; the sequence is GEGGGSDGSSG. The span at 274 to 296 shows a compositional bias: polar residues; sequence NGQNTTPTSPQSSQPAVQRSQKS.

The protein resides in the cell membrane. This is an uncharacterized protein from Mycoplasma genitalium (strain ATCC 33530 / DSM 19775 / NCTC 10195 / G37) (Mycoplasmoides genitalium).